Here is a 173-residue protein sequence, read N- to C-terminus: Large ribosomal subunit protein uL10 (173 aa).

The protein belongs to the universal ribosomal protein uL10 family. As to quaternary structure, part of the ribosomal stalk of the 50S ribosomal subunit. The N-terminus interacts with L11 and the large rRNA to form the base of the stalk. The C-terminus forms an elongated spine to which L12 dimers bind in a sequential fashion forming a multimeric L10(L12)X complex.

In terms of biological role, forms part of the ribosomal stalk, playing a central role in the interaction of the ribosome with GTP-bound translation factors. This is Large ribosomal subunit protein uL10 from Chlorobaculum tepidum (strain ATCC 49652 / DSM 12025 / NBRC 103806 / TLS) (Chlorobium tepidum).